The primary structure comprises 406 residues: Argininosuccinate synthase (406 aa).

ATP is bound by residues Ala11–Ser19 and Ala38. L-citrulline is bound by residues Tyr91 and Ser96. An ATP-binding site is contributed by Gly121. Thr123, Asn127, and Asp128 together coordinate L-aspartate. Asn127 contributes to the L-citrulline binding site. Arg131, Ser181, Ser190, Glu266, and Tyr278 together coordinate L-citrulline.

This sequence belongs to the argininosuccinate synthase family. Type 1 subfamily. In terms of assembly, homotetramer.

Its subcellular location is the cytoplasm. It catalyses the reaction L-citrulline + L-aspartate + ATP = 2-(N(omega)-L-arginino)succinate + AMP + diphosphate + H(+). The protein operates within amino-acid biosynthesis; L-arginine biosynthesis; L-arginine from L-ornithine and carbamoyl phosphate: step 2/3. The polypeptide is Argininosuccinate synthase (Campylobacter jejuni subsp. jejuni serotype O:23/36 (strain 81-176)).